A 261-amino-acid chain; its full sequence is Troponin T, slow skeletal muscle (261 aa).

The segment covering 1 to 30 has biased composition (acidic residues); that stretch reads MSDTEEQEYEEEQAEDEEAVEEEAPEEPEP. Disordered stretches follow at residues 1 to 61 and 108 to 152; these read MSDT…ERVD and ERAE…KKKV. Phosphoserine; by CK2 is present on Ser-2. Basic and acidic residues predominate over residues 31–40; it reads VAEREEERPK. Residues 42-54 show a composition bias toward pro residues; that stretch reads SRPVVPPLIPPKI. Basic and acidic residues predominate over residues 108-148; the sequence is ERAEQQRFRTEKERERQAKLAEEKMRKEEEEAKKRAEDDAK.

It belongs to the troponin T family. Interacts with TPM3. As to expression, expressed in soleus muscle. Isoform 4 is predominantly expressed in fast muscles.

Troponin T is the tropomyosin-binding subunit of troponin, the thin filament regulatory complex which confers calcium-sensitivity to striated muscle actomyosin ATPase activity. This chain is Troponin T, slow skeletal muscle (Tnnt1), found in Rattus norvegicus (Rat).